The primary structure comprises 320 residues: Ribose-phosphate pyrophosphokinase 1 (320 aa).

Residues 39 to 41 (DGE) and 98 to 99 (RQ) contribute to the ATP site. 2 residues coordinate Mg(2+): His132 and Asp173. Residue Lys196 is part of the active site. Residues Arg198, Asp224, and 228-232 (DTAGT) each bind D-ribose 5-phosphate.

The protein belongs to the ribose-phosphate pyrophosphokinase family. Class I subfamily. As to quaternary structure, homohexamer. It depends on Mg(2+) as a cofactor.

Its subcellular location is the cytoplasm. It catalyses the reaction D-ribose 5-phosphate + ATP = 5-phospho-alpha-D-ribose 1-diphosphate + AMP + H(+). It participates in metabolic intermediate biosynthesis; 5-phospho-alpha-D-ribose 1-diphosphate biosynthesis; 5-phospho-alpha-D-ribose 1-diphosphate from D-ribose 5-phosphate (route I): step 1/1. In terms of biological role, involved in the biosynthesis of the central metabolite phospho-alpha-D-ribosyl-1-pyrophosphate (PRPP) via the transfer of pyrophosphoryl group from ATP to 1-hydroxyl of ribose-5-phosphate (Rib-5-P). The polypeptide is Ribose-phosphate pyrophosphokinase 1 (Streptococcus pyogenes serotype M1).